A 152-amino-acid polypeptide reads, in one-letter code: Lipoprotein signal peptidase (152 aa).

Helical transmembrane passes span 55–75 and 85–105; these read NKMWFFYIITVVFVGFIVFYM and LGISLGLILGGAIGNFIDRVF. Catalysis depends on residues Asp-111 and Asp-129. A helical membrane pass occupies residues 124 to 144; that stretch reads VFNIADSALCIGVVLIIIQTL.

It belongs to the peptidase A8 family.

It is found in the cell membrane. It carries out the reaction Release of signal peptides from bacterial membrane prolipoproteins. Hydrolyzes -Xaa-Yaa-Zaa-|-(S,diacylglyceryl)Cys-, in which Xaa is hydrophobic (preferably Leu), and Yaa (Ala or Ser) and Zaa (Gly or Ala) have small, neutral side chains.. It participates in protein modification; lipoprotein biosynthesis (signal peptide cleavage). Functionally, this protein specifically catalyzes the removal of signal peptides from prolipoproteins. The protein is Lipoprotein signal peptidase of Bacillus cytotoxicus (strain DSM 22905 / CIP 110041 / 391-98 / NVH 391-98).